The primary structure comprises 413 residues: RNA-binding protein 41 (413 aa).

A compositionally biased stretch (polar residues) spans 223 to 235 (SVGDSGTAESPSL). The interval 223–247 (SVGDSGTAESPSLLQDKGKQAAQGK) is disordered. Serine 232 carries the post-translational modification Phosphoserine. Residues 309–387 (KVLYLKNLSP…KILVIEFGKN (79 aa)) form the RRM domain.

Functionally, may bind RNA. This chain is RNA-binding protein 41 (RBM41), found in Homo sapiens (Human).